The chain runs to 135 residues: Lysozyme 2 (135 aa).

Residues 1 to 18 (MNFLILFCVVASASVVYS) form the signal peptide. The 117-residue stretch at 19–135 (SISDQCLRCI…WRLVQAKGCS (117 aa)) folds into the I-type lysozyme domain. Disulfide bonds link Cys24–Cys100, Cys29–Cys35, Cys40–Cys49, Cys62–Cys82, Cys72–Cys78, and Cys96–Cys114. Residue Glu32 is the Proton donor of the active site. Asp43 functions as the Nucleophile in the catalytic mechanism. Position 55–61 (55–61 (KQGYWTD)) interacts with substrate. Substrate-binding positions include Tyr86 and 107–109 (HNG).

Expressed in the epithelia of the basophil cells in the digestive tubules, but not in the epithelial cells lining the digestive ducts and stomach. Expressed at a much lower level in the style sac-midgut tissues. No expression detected in mantle, gills, labial palps or hemocytes.

It localises to the secreted. The catalysed reaction is Hydrolysis of (1-&gt;4)-beta-linkages between N-acetylmuramic acid and N-acetyl-D-glucosamine residues in a peptidoglycan and between N-acetyl-D-glucosamine residues in chitodextrins.. Activity decreased by 80% by addition of 0.01 M calcium, zinc or magnesium. Activity only decreased by 17% by addition of ammonium, and by 2% by addition of sodium. Functionally, the main role of this lysozyme is in digestion. Has antibacterial activity against the Gram-positive bacterium P.cerevisiae and the Gram-negative bacteria E.coli and V.vulnificus. Shows some chitinase activity but no isopeptidase activity. This chain is Lysozyme 2, found in Crassostrea virginica (Eastern oyster).